The following is a 138-amino-acid chain: Protein NrdI (138 aa).

This sequence belongs to the NrdI family.

Probably involved in ribonucleotide reductase function. In Beutenbergia cavernae (strain ATCC BAA-8 / DSM 12333 / CCUG 43141 / JCM 11478 / NBRC 16432 / NCIMB 13614 / HKI 0122), this protein is Protein NrdI.